A 76-amino-acid polypeptide reads, in one-letter code: Small ribosomal subunit protein bS18 (76 aa).

It belongs to the bacterial ribosomal protein bS18 family. As to quaternary structure, part of the 30S ribosomal subunit. Forms a tight heterodimer with protein bS6.

Its function is as follows. Binds as a heterodimer with protein bS6 to the central domain of the 16S rRNA, where it helps stabilize the platform of the 30S subunit. This Pelotomaculum thermopropionicum (strain DSM 13744 / JCM 10971 / SI) protein is Small ribosomal subunit protein bS18.